The chain runs to 489 residues: Protein MGF 505-2R (489 aa).

The protein belongs to the asfivirus MGF 505 family.

Functionally, plays a role in virus cell tropism, and may be required for efficient virus replication in macrophages. This chain is Protein MGF 505-2R, found in Ornithodoros (relapsing fever ticks).